The following is a 942-amino-acid chain: Lambda-carrageenase (942 aa).

The signal sequence occupies residues 1 to 25 (MKIKILSAMVASSLLIGCVIPTVKA).

As to quaternary structure, monomer.

The protein resides in the secreted. It catalyses the reaction Endohydrolysis of (1-&gt;4)-beta-linkages in the backbone of lambda-carrageenan, resulting in the tetrasaccharide alpha-D-Galp2,6S2-(1-&gt;3)-beta-D-Galp2S-(1-&gt;4)-alpha-D-Galp2,6S2-(1-&gt;3)-D-Galp2S.. Its function is as follows. Hydrolyzes lambda-carrageenan with inversion of anomeric configuration. Does not hydrolyze iota- and kappa-carrageenans, agarose or porphyran. The protein is Lambda-carrageenase of Pseudoalteromonas carrageenovora (Alteromonas carrageenovora).